A 630-amino-acid polypeptide reads, in one-letter code: 1-deoxy-D-xylulose-5-phosphate synthase (630 aa).

Residues His-72 and 113–115 each bind thiamine diphosphate; that span reads GHS. Asp-144 lines the Mg(2+) pocket. Thiamine diphosphate is bound by residues 145–146, Asn-173, Tyr-284, and Glu-367; that span reads GA. Asn-173 contacts Mg(2+).

The protein belongs to the transketolase family. DXPS subfamily. As to quaternary structure, homodimer. The cofactor is Mg(2+). Thiamine diphosphate is required as a cofactor.

The enzyme catalyses D-glyceraldehyde 3-phosphate + pyruvate + H(+) = 1-deoxy-D-xylulose 5-phosphate + CO2. It participates in metabolic intermediate biosynthesis; 1-deoxy-D-xylulose 5-phosphate biosynthesis; 1-deoxy-D-xylulose 5-phosphate from D-glyceraldehyde 3-phosphate and pyruvate: step 1/1. Its function is as follows. Catalyzes the acyloin condensation reaction between C atoms 2 and 3 of pyruvate and glyceraldehyde 3-phosphate to yield 1-deoxy-D-xylulose-5-phosphate (DXP). The sequence is that of 1-deoxy-D-xylulose-5-phosphate synthase from Bacillus cereus (strain AH820).